Here is a 1239-residue protein sequence, read N- to C-terminus: Structural polyprotein (1239 aa).

The necessary for nucleocapsid assembly and virus assembly stretch occupies residues M1–P35. Residues M1 to R101 are disordered. Residues P23–P34 are compositionally biased toward pro residues. Residues L36–K69 form a host transcription inhibition region. The Supraphysiological nuclear export signal signature appears at L43–L50. N49 carries N-linked (GlcNAc...) asparagine; by host glycosylation. The Nuclear localization signal signature appears at K66 to K69. The segment covering K79–R101 has biased composition (basic residues). Positions K81–T111 are binding to the viral RNA. A ribosome-binding region spans residues P96–K110. The residue at position 108 (S108) is a Phosphoserine. Positions K110–W259 constitute a Peptidase S3 domain. Phosphothreonine is present on T111. H136 functions as the Charge relay system in the catalytic mechanism. The interaction with spike glycoprotein E2 stretch occupies residues K152–Y157. Catalysis depends on charge relay system residues D158 and S210. The tract at residues Q244–T248 is interaction with spike glycoprotein E2. Residues S260 to I271 are functions as an uncleaved signal peptide for the precursor of protein E3/E2. Residues S260 to R681 are Extracellular-facing. Intrachain disulfides connect C266–C275, C280–C284, C283–C315, C341–C444, C344–C349, C411–C425, C472–C585, C521–C545, and C523–C539. N270 carries N-linked (GlcNAc...) asparagine; by host glycosylation. A glycan (N-linked (GlcNAc...) asparagine; by host) is linked at N637. A helical membrane pass occupies residues Y682 to D702. Topologically, residues H703 to A742 are cytoplasmic. The S-palmitoyl cysteine; by host moiety is linked to residue C705. An interaction with the capsid protein region spans residues G710–L714. Residues L714–L734 form a transient transmembrane before p62-6K protein processing region. Residues C715, C735, and C736 are each lipidated (S-palmitoyl cysteine; by host). C715 and C736 are disulfide-bonded. Over D743–N754 the chain is Extracellular. The helical transmembrane segment at N755 to M775 threads the bilayer. Position 776 (R776) is a topological domain, cytoplasmic. The chain crosses the membrane as a helical span at residues M777–A797. At A798–G1215 the chain is on the extracellular side. Disulfide bonds link C847-C912, C860-C892, C861-C894, and C866-C876. The E1 fusion peptide loop stretch occupies residues V882 to T899. N-linked (GlcNAc...) asparagine; by host glycans are attached at residues N932 and N1069. 3 cysteine pairs are disulfide-bonded: C1058/C1070, C1100/C1175, and C1105/C1179. A helical membrane pass occupies residues T1216–F1236. The Cytoplasmic portion of the chain corresponds to H1237–H1239.

In terms of assembly, homodimer. Homomultimer. Interacts with host karyopherin KPNA4; this interaction allows the nuclear import of the viral capsid protein. Interacts with spike glycoprotein E2. Interacts with host IRAK1; the interaction leads to inhibition of IRAK1-dependent signaling. Part of a tetrameric complex composed of host CRM1, host importin alpha/beta dimer and the viral capsid; this complex blocks the receptor-mediated transport through the nuclear pore. Interacts with host phosphatase PPP1CA; this interaction dephosphorylates the capsid protein, which increases its ability to bind to the viral genome. The precursor of protein E3/E2 and E1 form a heterodimer shortly after synthesis. As to quaternary structure, the precursor of protein E3/E2 and E1 form a heterodimer shortly after synthesis. Processing of the precursor of protein E3/E2 into E2 and E3 results in a heterodimer of the spike glycoproteins E2 and E1. Spike at virion surface are constituted of three E2-E1 heterodimers. After target cell attachment and endocytosis, E1 change conformation to form homotrimers. E2-E1 heterodimers interact with host VLDLR or LRP8/APOER2 to mediate viral entry. Interacts with 6K protein. In terms of assembly, interacts with spike glycoprotein E1. Processing of the precursor of protein E3/E2 into E2 and E3 results in a heterodimer of the spike glycoproteins E2 and E1. Spike at virion surface are constituted of a trimer of E2-E1 heterodimers. Interacts with 6K protein. E2-E1 heterodimers interact with host VLDLR or LRP8/APOER2 to mediate viral entry. Interacts (via E2-A) with host VLDLR (via class A repeats); this interaction mediates viral entry into host cell. Interacts with host LRP8/APOER2 (via class A repeats); this interaction mediates viral entry into host cell. Oligomer. Interacts with spike glycoprotein E1. Interacts with spike glycoprotein E2. In terms of processing, structural polyprotein: Specific enzymatic cleavages in vivo yield mature proteins. Capsid protein is auto-cleaved during polyprotein translation, unmasking a signal peptide at the N-terminus of the precursor of E3/E2. The remaining polyprotein is then targeted to the host endoplasmic reticulum, where host signal peptidase cleaves it into pE2, 6K and E1 proteins. pE2 is further processed to mature E3 and E2 by host furin in trans-Golgi vesicle. Phosphorylated on serine and threonine residues. Post-translationally, palmitoylated via thioester bonds. These palmitoylations may induce disruption of the C-terminus transmembrane. This would result in the reorientation of E2 C-terminus from lumenal to cytoplasmic side. In terms of processing, N-glycosylated. Palmitoylated via thioester bonds.

Its subcellular location is the virion. The protein localises to the host cytoplasm. It is found in the host cell membrane. The protein resides in the host nucleus. It localises to the virion membrane. Its subcellular location is the host Golgi apparatus. The protein localises to the host trans-Golgi network. It is found in the host endoplasmic reticulum. The enzyme catalyses Autocatalytic release of the core protein from the N-terminus of the togavirus structural polyprotein by hydrolysis of a -Trp-|-Ser- bond.. In terms of biological role, forms an icosahedral capsid with a T=4 symmetry composed of 240 copies of the capsid protein surrounded by a lipid membrane through which penetrate 80 spikes composed of trimers of E1-E2 heterodimers. The capsid protein binds to the viral RNA genome at a site adjacent to a ribosome binding site for viral genome translation following genome release. Possesses a protease activity that results in its autocatalytic cleavage from the nascent structural protein. Following its self-cleavage, the capsid protein transiently associates with ribosomes, and within several minutes the protein binds to viral RNA and rapidly assembles into icosahedric core particles. The resulting nucleocapsid eventually associates with the cytoplasmic domain of the spike glycoprotein E2 at the cell membrane, leading to budding and formation of mature virions. In case of infection, new virions attach to target cells and after clathrin-mediated endocytosis their membrane fuses with the host endosomal membrane. This leads to the release of the nucleocapsid into the cytoplasm, followed by an uncoating event necessary for the genomic RNA to become accessible. The uncoating might be triggered by the interaction of capsid proteins with ribosomes. Binding of ribosomes would release the genomic RNA since the same region is genomic RNA-binding and ribosome-binding. Specifically inhibits interleukin-1 receptor-associated kinase 1/IRAK1-dependent signaling during viral entry, representing a means by which the alphaviruses may evade innate immune detection and activation prior to viral gene expression. Inhibits host transcription. Forms a tetrameric complex with XPO1/CRM1 and the nuclear import receptor importin. This complex blocks the central channel of host nuclear pores thereby inhibiting the receptor-mediated nuclear transport and thus the host mRNA and rRNA transcription. The inhibition of transcription is linked to a cytopathic effect on the host cell. Its function is as follows. Provides the signal sequence for the translocation of the precursor of protein E3/E2 to the host endoplasmic reticulum. Furin-cleaved E3 remains associated with spike glycoprotein E1 and mediates pH protection of the latter during the transport via the secretory pathway. After virion release from the host cell, the assembly protein E3 is gradually released in the extracellular space. Plays a role in viral attachment to target host cell, by binding to the cell receptors VLDLR or LRP8/APOER2. Synthesized as a p62 precursor which is processed by furin at the cell membrane just before virion budding, giving rise to E2-E1 heterodimer. The p62-E1 heterodimer is stable, whereas E2-E1 is unstable and dissociate at low pH. p62 is processed at the last step, presumably to avoid E1 fusion activation before its final export to cell surface. E2 C-terminus contains a transitory transmembrane that would be disrupted by palmitoylation, resulting in reorientation of the C-terminal tail from lumenal to cytoplasmic side. This step is critical since E2 C-terminus is involved in budding by interacting with capsid proteins. This release of E2 C-terminus in cytoplasm occurs lately in protein export, and precludes premature assembly of particles at the endoplasmic reticulum membrane. Functionally, acts as a viroporin that participates in virus glycoprotein processing and transport to the plasma membrane, cell permeabilization and budding of viral particles. Disrupts the calcium homeostasis of the cell, probably at the endoplasmic reticulum level. This leads to cytoplasmic calcium elevation. Because of its lipophilic properties, the 6K protein is postulated to influence the selection of lipids that interact with the transmembrane domains of the glycoproteins, which, in turn, affects the deformability of the bilayer required for the extreme curvature that occurs as budding proceeds. Present in low amount in virions, about 3% compared to viral glycoproteins. In terms of biological role, class II viral fusion protein. Fusion activity is inactive as long as E1 is bound to E2 in mature virion. After virus attachment to target cell via host VLDLR or LRP8/APOER2 and endocytosis, acidification of the endosome induces dissociation of E1/E2 heterodimer and concomitant trimerization of the E1 subunits. This E1 trimer is fusion active, and promotes release of viral nucleocapsid in cytoplasm after endosome and viral membrane fusion. Efficient fusion requires the presence of cholesterol and sphingolipid in the target membrane. This Aedes (Human) protein is Structural polyprotein.